The sequence spans 496 residues: Probable cytosol aminopeptidase (496 aa).

The Mn(2+) site is built by Lys268 and Asp273. Lys280 is an active-site residue. The Mn(2+) site is built by Asp291, Asp350, and Glu352. Residue Arg354 is part of the active site.

This sequence belongs to the peptidase M17 family. Mn(2+) is required as a cofactor.

It is found in the cytoplasm. The catalysed reaction is Release of an N-terminal amino acid, Xaa-|-Yaa-, in which Xaa is preferably Leu, but may be other amino acids including Pro although not Arg or Lys, and Yaa may be Pro. Amino acid amides and methyl esters are also readily hydrolyzed, but rates on arylamides are exceedingly low.. It catalyses the reaction Release of an N-terminal amino acid, preferentially leucine, but not glutamic or aspartic acids.. Its function is as follows. Presumably involved in the processing and regular turnover of intracellular proteins. Catalyzes the removal of unsubstituted N-terminal amino acids from various peptides. This chain is Probable cytosol aminopeptidase, found in Thioalkalivibrio sulfidiphilus (strain HL-EbGR7).